The following is a 525-amino-acid chain: Calcium uptake protein 1 homolog, mitochondrial (525 aa).

The disordered stretch occupies residues Ala109–Leu146. Residues Ser130–Gly141 are compositionally biased toward acidic residues. 2 consecutive EF-hand domains span residues Ile268–Gln303 and Leu459–Arg494. Residues Asp281, Asn283, Asp285, Asp287, Glu292, Asp472, Asn474, Asp476, Gln478, and Glu483 each contribute to the Ca(2+) site.

This sequence belongs to the MICU1 family. MICU1 subfamily.

The protein resides in the mitochondrion intermembrane space. It is found in the mitochondrion inner membrane. In terms of biological role, calcium sensor of the mitochondrial calcium uniporter (MCU) channel, which senses calcium level via its EF-hand domains. At low calcium levels, MICU1 occludes the pore of the MCU channel, preventing mitochondrial calcium uptake. At higher calcium levels, calcium-binding to MICU1 induces a conformational change that weakens MCU-MICU1 interactions and moves MICU1 away from the pore, allowing calcium permeation through the MCU channel. Also required to protect against manganese toxicity by preventing manganese uptake by MCU. During development, required in alpha/beta or gamma mushroom body neurons to support olfactory intermediate-term memory in the adult. In Drosophila melanogaster (Fruit fly), this protein is Calcium uptake protein 1 homolog, mitochondrial.